The following is a 180-amino-acid chain: Large ribosomal subunit protein uL6 (180 aa).

It belongs to the universal ribosomal protein uL6 family. As to quaternary structure, part of the 50S ribosomal subunit.

In terms of biological role, this protein binds to the 23S rRNA, and is important in its secondary structure. It is located near the subunit interface in the base of the L7/L12 stalk, and near the tRNA binding site of the peptidyltransferase center. The protein is Large ribosomal subunit protein uL6 of Borrelia hermsii (strain HS1 / DAH).